The chain runs to 386 residues: Phosphoglycerate kinase (386 aa).

Substrate contacts are provided by residues 21-23 (DLN), arginine 36, 59-62 (HLGR), arginine 113, and arginine 146. ATP-binding positions include lysine 197, glutamate 314, and 340-343 (GGDT).

The protein belongs to the phosphoglycerate kinase family. In terms of assembly, monomer.

The protein resides in the cytoplasm. The enzyme catalyses (2R)-3-phosphoglycerate + ATP = (2R)-3-phospho-glyceroyl phosphate + ADP. It participates in carbohydrate degradation; glycolysis; pyruvate from D-glyceraldehyde 3-phosphate: step 2/5. This chain is Phosphoglycerate kinase, found in Marinobacter nauticus (strain ATCC 700491 / DSM 11845 / VT8) (Marinobacter aquaeolei).